The primary structure comprises 582 residues: MTQGPGGRAPPAPPAPPEPEAPTTFCALLPRMPQWKFAAPGGFLGRGPAAARAAGASGGADPQPEPAGPGGVPALAAAVLGACEPRCAAPCPLPALSRCRGAGSRGSRGGRGAAGSGDAAAAAEWIRKGSFIHKPAHGWLHPDARVLGPGVSYVVRYMGCIEVLRSMRSLDFNTRTQVTREAINRLHEAVPGVRGSWKKKAPNKALASVLGKSNLRFAGMSISIHISTDGLSLSVPATRQVIANHHMPSISFASGGDTDMTDYVAYVAKDPINQRACHILECCEGLAQSIISTVGQAFELRFKQYLHSPPKVALPPERLAGPEESAWGDEEDSLEHNYYNSIPGKEPPLGGLVDSRLALTQPCALTALDQGPSPSLRDACSLPWDVGSTGTAPPGDGYVQADARGPPDHEEHLYVNTQGLDAPEPEDSPKKDLFDMRPFEDALKLHECSVAAGVTAAPLPLEDQWPSPPTRRAPVAPTEEQLRQEPWYHGRMSRRAAERMLRADGDFLVRDSVTNPGQYVLTGMHAGQPKHLLLVDPEGVVRTKDVLFESISHLIDHHLQNGQPIVAAESELHLRGVVSREP.

2 disordered regions span residues 1–24 (MTQG…APTT) and 47–70 (GPAA…AGPG). A compositionally biased stretch (pro residues) spans 8 to 20 (RAPPAPPAPPEPE). The region spanning 147 to 329 (LGPGVSYVVR…AGPEESAWGD (183 aa)) is the PID domain. Positions 330 to 486 (EEDSLEHNYY…PTEEQLRQEP (157 aa)) are CH1. Residues tyrosine 338, tyrosine 339, and tyrosine 414 each carry the phosphotyrosine modification. The interval 460–481 (PLEDQWPSPPTRRAPVAPTEEQ) is disordered. The SH2 domain maps to 487–578 (WYHGRMSRRA…ESELHLRGVV (92 aa)).

In terms of assembly, interacts with the Trk receptors in a phosphotyrosine-dependent manner and MEGF12. Once activated, binds to GRB2. Phosphorylated on tyrosines by the Trk receptors. Expressed in brain. Expressed at high level in the hypothalamus and at low level in the caudate nucleus.

In terms of biological role, signaling adapter that couples activated growth factor receptors to signaling pathway in neurons. Involved in the signal transduction pathways of neurotrophin-activated Trk receptors in cortical neurons. The sequence is that of SHC-transforming protein 2 (SHC2) from Homo sapiens (Human).